The chain runs to 540 residues: Ribonuclease Y (540 aa).

The helical transmembrane segment at 4-24 (TILVPVAVAIVSVLVGGCAGY) threads the bilayer. Residues 230 to 293 (TVSVVNLPND…EIAKRALERL (64 aa)) form the KH domain. In terms of domain architecture, HD spans 356–449 (VLSHSIEVGK…VVAADTISSA (94 aa)).

Belongs to the RNase Y family.

The protein resides in the cell membrane. Endoribonuclease that initiates mRNA decay. In Lactobacillus gasseri (strain ATCC 33323 / DSM 20243 / BCRC 14619 / CIP 102991 / JCM 1131 / KCTC 3163 / NCIMB 11718 / NCTC 13722 / AM63), this protein is Ribonuclease Y.